A 259-amino-acid polypeptide reads, in one-letter code: Leucine-rich repeat-containing protein 3B (259 aa).

Residues 1-33 (MNLVDLWLTRSLSMCLLLQSFVLMILCFHSASM) form the signal peptide. Positions 34–64 (CPKGCLCSSSGGLNVTCSNANLKEIPRDLPP) constitute an LRRNT domain. N-linked (GlcNAc...) asparagine glycosylation is present at Asn-47. LRR repeat units lie at residues 65 to 86 (ETVL…IFKD), 89 to 110 (QLRV…AFKG), and 114 to 135 (TLQT…AFNN). Residue Asn-94 is glycosylated (N-linked (GlcNAc...) asparagine). The region spanning 145-197 (NPWHCDCTLQQVLRSMVSNHETAHNVICKTSVLDEHAGRPFLNAANDADLCNL) is the LRRCT domain. A helical transmembrane segment spans residues 205–225 (AMLVTMFGWFTMVISYVVYYV).

Belongs to the LRRC3 family.

The protein resides in the membrane. This Bos taurus (Bovine) protein is Leucine-rich repeat-containing protein 3B (LRRC3B).